The primary structure comprises 154 residues: Aspartate carbamoyltransferase regulatory chain (154 aa).

Zn(2+) contacts are provided by Cys-109, Cys-114, Cys-138, and Cys-141.

It belongs to the PyrI family. In terms of assembly, contains catalytic and regulatory chains. Zn(2+) is required as a cofactor.

Involved in allosteric regulation of aspartate carbamoyltransferase. In Serratia proteamaculans (strain 568), this protein is Aspartate carbamoyltransferase regulatory chain.